Reading from the N-terminus, the 593-residue chain is Isocitrate dehydrogenase kinase/phosphatase (593 aa).

ATP is bound by residues 324-330 (APGIRGL) and K345. D380 is a catalytic residue.

It belongs to the AceK family.

The protein localises to the cytoplasm. The catalysed reaction is L-seryl-[isocitrate dehydrogenase] + ATP = O-phospho-L-seryl-[isocitrate dehydrogenase] + ADP + H(+). Its function is as follows. Bifunctional enzyme which can phosphorylate or dephosphorylate isocitrate dehydrogenase (IDH) on a specific serine residue. This is a regulatory mechanism which enables bacteria to bypass the Krebs cycle via the glyoxylate shunt in response to the source of carbon. When bacteria are grown on glucose, IDH is fully active and unphosphorylated, but when grown on acetate or ethanol, the activity of IDH declines drastically concomitant with its phosphorylation. The sequence is that of Isocitrate dehydrogenase kinase/phosphatase from Dechloromonas aromatica (strain RCB).